A 100-amino-acid chain; its full sequence is Small ribosomal subunit protein uS14c (100 aa).

Belongs to the universal ribosomal protein uS14 family. As to quaternary structure, part of the 30S ribosomal subunit.

The protein localises to the plastid. Its subcellular location is the chloroplast. Its function is as follows. Binds 16S rRNA, required for the assembly of 30S particles. This Psilotum nudum (Whisk fern) protein is Small ribosomal subunit protein uS14c.